We begin with the raw amino-acid sequence, 1181 residues long: Putative type II restriction enzyme and methyltransferase RM.MjaORFECS2P (1181 aa).

In the C-terminal section; belongs to the N(4)/N(6)-methyltransferase family.

It catalyses the reaction Endonucleolytic cleavage of DNA to give specific double-stranded fragments with terminal 5'-phosphates.. The enzyme catalyses a 2'-deoxyadenosine in DNA + S-adenosyl-L-methionine = an N(6)-methyl-2'-deoxyadenosine in DNA + S-adenosyl-L-homocysteine + H(+). Functionally, probably a G subtype restriction enzyme that recognizes an undetermined sequence and cleaves at an undetermined site. Probably also acts as an alpha subtype methylase, presumably on the same sequence. The sequence is that of Putative type II restriction enzyme and methyltransferase RM.MjaORFECS2P from Methanocaldococcus jannaschii (strain ATCC 43067 / DSM 2661 / JAL-1 / JCM 10045 / NBRC 100440) (Methanococcus jannaschii).